The primary structure comprises 334 residues: 6-phosphogluconolactonase (334 aa).

This sequence belongs to the cycloisomerase 2 family.

It catalyses the reaction 6-phospho-D-glucono-1,5-lactone + H2O = 6-phospho-D-gluconate + H(+). It participates in carbohydrate degradation; pentose phosphate pathway; D-ribulose 5-phosphate from D-glucose 6-phosphate (oxidative stage): step 2/3. Functionally, catalyzes the hydrolysis of 6-phosphogluconolactone to 6-phosphogluconate. The chain is 6-phosphogluconolactonase from Buchnera aphidicola subsp. Acyrthosiphon pisum (strain Tuc7).